The sequence spans 274 residues: Dermonecrotic toxin LspiSicTox-betaIII1 G (274 aa).

H5 is an active-site residue. Mg(2+) contacts are provided by E25 and D27. H41 serves as the catalytic Nucleophile. 2 cysteine pairs are disulfide-bonded: C45–C51 and C47–C189. N66 carries an N-linked (GlcNAc...) asparagine glycan. Mg(2+) is bound at residue D85.

Belongs to the arthropod phospholipase D family. Class II subfamily. Mg(2+) serves as cofactor. Expressed by the venom gland.

It is found in the secreted. It carries out the reaction an N-(acyl)-sphingosylphosphocholine = an N-(acyl)-sphingosyl-1,3-cyclic phosphate + choline. The enzyme catalyses an N-(acyl)-sphingosylphosphoethanolamine = an N-(acyl)-sphingosyl-1,3-cyclic phosphate + ethanolamine. It catalyses the reaction a 1-acyl-sn-glycero-3-phosphocholine = a 1-acyl-sn-glycero-2,3-cyclic phosphate + choline. The catalysed reaction is a 1-acyl-sn-glycero-3-phosphoethanolamine = a 1-acyl-sn-glycero-2,3-cyclic phosphate + ethanolamine. Dermonecrotic toxins cleave the phosphodiester linkage between the phosphate and headgroup of certain phospholipids (sphingolipid and lysolipid substrates), forming an alcohol (often choline) and a cyclic phosphate. This toxin acts on sphingomyelin (SM). It may also act on ceramide phosphoethanolamine (CPE), lysophosphatidylcholine (LPC) and lysophosphatidylethanolamine (LPE), but not on lysophosphatidylserine (LPS), and lysophosphatidylglycerol (LPG). It acts by transphosphatidylation, releasing exclusively cyclic phosphate products as second products. Induces dermonecrosis, hemolysis, increased vascular permeability, edema, inflammatory response, and platelet aggregation. The sequence is that of Dermonecrotic toxin LspiSicTox-betaIII1 G from Loxosceles spinulosa (Recluse spider).